The following is a 522-amino-acid chain: 2-isopropylmalate synthase (522 aa).

The Pyruvate carboxyltransferase domain maps to 5-267 (VIIFDTTLRD…HTRINHQEIY (263 aa)). 4 residues coordinate Mn(2+): Asp14, His202, His204, and Asn238. Residues 392 to 522 (RLDTFNVQSG…SQVKDQKETV (131 aa)) are regulatory domain.

It belongs to the alpha-IPM synthase/homocitrate synthase family. LeuA type 1 subfamily. Homodimer. Mn(2+) is required as a cofactor.

The protein resides in the cytoplasm. It carries out the reaction 3-methyl-2-oxobutanoate + acetyl-CoA + H2O = (2S)-2-isopropylmalate + CoA + H(+). It participates in amino-acid biosynthesis; L-leucine biosynthesis; L-leucine from 3-methyl-2-oxobutanoate: step 1/4. In terms of biological role, catalyzes the condensation of the acetyl group of acetyl-CoA with 3-methyl-2-oxobutanoate (2-ketoisovalerate) to form 3-carboxy-3-hydroxy-4-methylpentanoate (2-isopropylmalate). In Erwinia tasmaniensis (strain DSM 17950 / CFBP 7177 / CIP 109463 / NCPPB 4357 / Et1/99), this protein is 2-isopropylmalate synthase.